A 143-amino-acid polypeptide reads, in one-letter code: Large ribosomal subunit protein uL11 (143 aa).

This sequence belongs to the universal ribosomal protein uL11 family. Part of the ribosomal stalk of the 50S ribosomal subunit. Interacts with L10 and the large rRNA to form the base of the stalk. L10 forms an elongated spine to which L12 dimers bind in a sequential fashion forming a multimeric L10(L12)X complex. One or more lysine residues are methylated.

Its function is as follows. Forms part of the ribosomal stalk which helps the ribosome interact with GTP-bound translation factors. This chain is Large ribosomal subunit protein uL11, found in Cutibacterium acnes (strain DSM 16379 / KPA171202) (Propionibacterium acnes).